The sequence spans 205 residues: Large ribosomal subunit protein bL25A (205 aa).

Belongs to the bacterial ribosomal protein bL25 family. CTC subfamily. Part of the 50S ribosomal subunit; part of the 5S rRNA/L5/L18/L25 subcomplex. Contacts the 5S rRNA. Binds to the 5S rRNA independently of L5 and L18.

This is one of the proteins that binds to the 5S RNA in the ribosome where it forms part of the central protuberance. This Symbiobacterium thermophilum (strain DSM 24528 / JCM 14929 / IAM 14863 / T) protein is Large ribosomal subunit protein bL25A.